The sequence spans 141 residues: Large ribosomal subunit protein uL11 (141 aa).

The protein belongs to the universal ribosomal protein uL11 family. Part of the ribosomal stalk of the 50S ribosomal subunit. Interacts with L10 and the large rRNA to form the base of the stalk. L10 forms an elongated spine to which L12 dimers bind in a sequential fashion forming a multimeric L10(L12)X complex. In terms of processing, one or more lysine residues are methylated.

Functionally, forms part of the ribosomal stalk which helps the ribosome interact with GTP-bound translation factors. In Roseiflexus sp. (strain RS-1), this protein is Large ribosomal subunit protein uL11.